The primary structure comprises 421 residues: POU domain, class 4, transcription factor 1 (421 aa).

Positions 57 to 66 match the POU-IV box motif; it reads RAEALAAVDI. Disordered stretches follow at residues 94-117 and 133-200; these read STVP…GDLL and GAGA…GLGH. Positions 99 to 108 are enriched in basic residues; sequence AHHHHHHHHH. A compositionally biased stretch (gly residues) spans 133-186; that stretch reads GAGAAGGGGGAHDGPGGGGGPGGGGGPGGGGPGGGGGGGGPGGGGGGPGGGLLG. The POU-specific domain occupies 262 to 339; that stretch reads DSDTDPRELE…ILQAWLEEAE (78 aa). Positions 357 to 416 form a DNA-binding region, homeobox; the sequence is KKRKRTSIAAPEKRSLEAYFAVQPRPSSEKIAAIAEKLDLKKNVVRVWFCNQRQKQKRMK.

It belongs to the POU transcription factor family. Class-4 subfamily. Interacts (via N-terminus) with RIT2; the interaction controls POU4F1 transactivation activity on some neuronal target genes. Isoform 1 interacts with POU4F2 isoform 2; this interaction inhibits both POU4F1 DNA-binding and transcriptional activities. Isoform 1 interacts (C-terminus) with ESR1 (via DNA-binding domain); this interaction decreases the estrogen receptor ESR1 transcriptional activity in a DNA- and ligand 17-beta-estradiol-independent manner. Expressed in mature osteoclasts (at protein level). Brain, peripheral sensory nervous system and retina. In the adult nervous system, predominates in the medial habenula, superficial gray of the superior colliculus, red nucleus, mesencephalic nucleus of the trigeminal ganglion, nucleus ambiguus, inferior olivary nucleus, and peripheral sensory ganglia.

The protein resides in the nucleus. It localises to the cytoplasm. In terms of biological role, multifunctional transcription factor with different regions mediating its different effects. Acts by binding (via its C-terminal domain) to sequences related to the consensus octamer motif 5'-ATGCAAAT-3' in the regulatory regions of its target genes. Regulates the expression of specific genes involved in differentiation and survival within a subset of neuronal lineages. It has been shown that activation of some of these genes requires its N-terminal domain, maybe through a neuronal-specific cofactor. Activates BCL2 expression and protects neuronal cells from apoptosis (via the N-terminal domain). Induces neuronal process outgrowth and the coordinate expression of genes encoding synaptic proteins. Exerts its major developmental effects in somatosensory neurons and in brainstem nuclei involved in motor control. Stimulates the binding affinity of the nuclear estrogene receptor ESR1 to DNA estrogen response element (ERE), and hence modulates ESR1-induced transcriptional activity. May positively regulate POU4F2 and POU4F3. Regulates dorsal root ganglion sensory neuron specification and axonal projection into the spinal cord. Plays a role in TNFSF11-mediated terminal osteoclast differentiation. Negatively regulates its own expression interacting directly with a highly conserved autoregulatory domain surrounding the transcription initiation site. Functionally, able to act as transcription factor, cannot regulate the expression of the same subset of genes than isoform 1. Does not have antiapoptotic effect on neuronal cells. The protein is POU domain, class 4, transcription factor 1 (Pou4f1) of Mus musculus (Mouse).